Reading from the N-terminus, the 400-residue chain is Aspartate/prephenate aminotransferase (400 aa).

Residues G39, W125, and N175 each contribute to the L-aspartate site. K239 is modified (N6-(pyridoxal phosphate)lysine). Residue R375 participates in L-aspartate binding.

It belongs to the class-I pyridoxal-phosphate-dependent aminotransferase family. In terms of assembly, homodimer. Pyridoxal 5'-phosphate serves as cofactor.

The protein localises to the cytoplasm. It carries out the reaction L-aspartate + 2-oxoglutarate = oxaloacetate + L-glutamate. The catalysed reaction is L-arogenate + 2-oxoglutarate = prephenate + L-glutamate. Its function is as follows. Catalyzes the reversible conversion of aspartate and 2-oxoglutarate to glutamate and oxaloacetate. Can also transaminate prephenate in the presence of glutamate. Required for symbiotic nitrogen fixation. In Rhizobium meliloti (strain 1021) (Ensifer meliloti), this protein is Aspartate/prephenate aminotransferase.